The primary structure comprises 184 residues: Large ribosomal subunit protein uL5 (184 aa).

Belongs to the universal ribosomal protein uL5 family. As to quaternary structure, part of the 50S ribosomal subunit; part of the 5S rRNA/L5/L18/L25 subcomplex. Contacts the 5S rRNA and the P site tRNA. Forms a bridge to the 30S subunit in the 70S ribosome.

This is one of the proteins that bind and probably mediate the attachment of the 5S RNA into the large ribosomal subunit, where it forms part of the central protuberance. In the 70S ribosome it contacts protein S13 of the 30S subunit (bridge B1b), connecting the 2 subunits; this bridge is implicated in subunit movement. Contacts the P site tRNA; the 5S rRNA and some of its associated proteins might help stabilize positioning of ribosome-bound tRNAs. The protein is Large ribosomal subunit protein uL5 of Pelagibacter ubique (strain HTCC1062).